The sequence spans 1204 residues: Cingulin (1204 aa).

Residues 7–357 (MAEPRGPVDH…GVISSGSSKA (351 aa)) form a head region. Positions 25-48 (EPVSGAEMGTLRRGGRRPAKDARA) are disordered. The ZIM motif lies at 48–62 (ASTYGVAVRVQGIAG). The interval 54–67 (AVRVQGIAGQPFVV) is interaction with TJP1/ZO1. 2 disordered regions span residues 68–174 (LNSG…DTAP) and 186–266 (DGQL…FSRA). Residues 93-119 (ALSSDSELPENPYSQVQGFPAPSQSST) are compositionally biased toward polar residues. 10 positions are modified to phosphoserine: Ser-95, Ser-96, Ser-98, Ser-135, Ser-137, Ser-140, Ser-155, Ser-165, Ser-214, and Ser-217. The span at 207-231 (EQRKRSKSLDSRLPRDTLEERERQS) shows a compositional bias: basic and acidic residues. The span at 232–245 (TNHWNPSTKYNNHV) shows a compositional bias: polar residues. The segment covering 247–261 (SLKQPAQSPSPSPLS) has biased composition (low complexity). Ser-258, Ser-276, Ser-338, and Ser-351 each carry phosphoserine. A coiled-coil region spans residues 358 to 1161 (MAGQGELARK…SLEKDSWRKA (804 aa)). Residues 379–398 (VKKRQKLEPSRAGLERQLEE) are disordered. An N6-acetyllysine modification is found at Lys-579. The tract at residues 1161–1182 (ASRSAAESALKHEGLSSDEEFD) is disordered. A tail region spans residues 1162–1204 (SRSAAESALKHEGLSSDEEFDSVYDPSSIASLLTESNLQTSSC). 3 positions are modified to phosphoserine: Ser-1176, Ser-1177, and Ser-1183.

The protein belongs to the cingulin family. Homodimer. Interacts with TJP1/ZO1 and SPEF1.

It localises to the cell junction. The protein resides in the tight junction. Probably plays a role in the formation and regulation of the tight junction (TJ) paracellular permeability barrier. The chain is Cingulin from Plecturocebus moloch (Dusky titi monkey).